A 130-amino-acid polypeptide reads, in one-letter code: Fluoride-specific ion channel FluC (130 aa).

A run of 4 helical transmembrane segments spans residues 3–23 (FVFL…YFVG), 39–59 (GTFS…HLAV), 67–87 (FGIF…SYGL), and 102–122 (VSYA…GWFL). Na(+) is bound by residues G77 and T80.

It belongs to the fluoride channel Fluc/FEX (TC 1.A.43) family.

The protein resides in the cell inner membrane. The enzyme catalyses fluoride(in) = fluoride(out). Its activity is regulated as follows. Na(+) is not transported, but it plays an essential structural role and its presence is essential for fluoride channel function. Functionally, fluoride-specific ion channel. Important for reducing fluoride concentration in the cell, thus reducing its toxicity. This chain is Fluoride-specific ion channel FluC, found in Helicobacter pylori (strain ATCC 700392 / 26695) (Campylobacter pylori).